The following is a 1460-amino-acid chain: DNA-binding protein RFX7 (1460 aa).

The interval 1–34 (MAEEQQQPPPQQPDAHQQLPPSAPNSGVALPALV) is disordered. A DNA-binding region (RFX-type winged-helix) is located at residues 108–183 (AFSWIRNTLE…YCYSGLRKKA (76 aa)). The short motif at 188 to 193 (PTLPNL) is the PxLPxI/L motif; mediates interaction with ANKRA2 and RFXANK element. Residues 308–352 (QRKIQKKQQEQKLQSPLPGESAAKKSESATSNGVTNLPNGNPSIL) are disordered. Ser322 carries the post-translational modification Phosphoserine. Polar residues predominate over residues 337–352 (TSNGVTNLPNGNPSIL). Ser379 bears the Phosphoserine mark. The segment covering 404 to 416 (SVKQAPKTPQNVP) has biased composition (polar residues). Positions 404-428 (SVKQAPKTPQNVPASPGGDRSARHR) are disordered. Phosphoserine occurs at positions 418 and 455. Residues 481-513 (TPSNSNTPLKHSASVSSATGTTEESRSVPQIKN) are compositionally biased toward polar residues. Disordered regions lie at residues 481–585 (TPSN…PSNE), 632–715 (TFTS…AQIP), and 917–1015 (QSVT…SVPP). Residues 515–535 (SVVSLQSPGSRSSSAGGTSAV) show a composition bias toward low complexity. Residues 537–549 (VKVEPETSSDEHP) show a composition bias toward basic and acidic residues. 2 stretches are compositionally biased toward polar residues: residues 563 to 583 (QTPS…QKPS) and 632 to 644 (TFTS…NGDS). Thr564 carries the phosphothreonine modification. The residue at position 662 (Ser662) is a Phosphoserine. At Lys704 the chain carries N6-acetyllysine. Polar residues-rich tracts occupy residues 705–715 (TEGSTAGAQIP) and 917–933 (QSVT…SSTH). Pro residues predominate over residues 947 to 963 (TPTPTPTPTPTPTPTPT). Residues 971–1009 (GSQSLSRESPCSRLAQTTPVDSALGSSRHTPIGTPHSNC) show a composition bias toward polar residues. Thr988 bears the Phosphothreonine mark. Phosphoserine is present on residues Ser1178 and Ser1329.

This sequence belongs to the RFX family. In terms of assembly, interacts (via PxLPxI/L motif) with RFXANK (via ankyrin repeats). Interacts (via PxLPxI/L motif) with ANKRA2 (via ankyrin repeats). In terms of tissue distribution, widely expressed in many different tissue types including thymus and placenta, with high expression in brain. Expressed in both inhibitory and excitatory neurons in cortex.

The protein resides in the nucleus. Functionally, transcription factor. Acts as a transcriptional activator by binding to promoter regions of target genes, such as PDCD4, PIK3IP1, MXD4, PNRC1, and RFX5. Plays a role in natural killer (NK) cell maintenance and immunity. May play a role in the process of ciliogenesis in the neural tube and neural tube closure. This Homo sapiens (Human) protein is DNA-binding protein RFX7.